A 339-amino-acid polypeptide reads, in one-letter code: Trace amine-associated receptor 1 (339 aa).

Residues 1–24 (MMPFCHNIINISCVKNNWSNDVRA) lie on the Extracellular side of the membrane. Disulfide bonds link Cys-5–Cys-178, Cys-13–Cys-88, and Cys-96–Cys-182. 2 N-linked (GlcNAc...) asparagine glycosylation sites follow: Asn-10 and Asn-17. Residues 25-49 (SLYSLMVLIILTTLVGNLIVIVSIS) form a helical membrane-spanning segment. Residues 50-59 (HFKQLHTPTN) lie on the Cytoplasmic side of the membrane. Residues 60-81 (WLIHSMATVDFLLGCLVMPYSM) form a helical membrane-spanning segment. Topologically, residues 82-96 (VRSAEHCWYFGEVFC) are extracellular. The helical transmembrane segment at 97 to 119 (KIHTSTDIMLSSASIFHLSFISI) threads the bilayer. Asp-103 is a 2-phenylethylamine binding site. Topologically, residues 120–139 (DRYYAVCDPLRYKAKMNILV) are cytoplasmic. Residues 140–161 (ICVMIFISWSVPAVFAFGMIFL) form a helical membrane-spanning segment. Topologically, residues 162 to 188 (ELNFKGAEEIYYKHVHCRGGCSVFFSK) are extracellular. An extracellular Loop 2 (ECL2) region spans residues 175–186 (HVHCRGGCSVFF). Residues 189–211 (ISGVLTFMTSFYIPGSIMLCVYY) traverse the membrane as a helical segment. Topologically, residues 212–249 (RIYLIAKEQARLISDANQKLQIGLEMKNGISQSKERKA) are cytoplasmic. A helical membrane pass occupies residues 250–273 (VKTLGIVMGVFLICWCPFFICTVM). At 274–286 (DPFLHYIIPPTLN) the chain is on the extracellular side. The chain crosses the membrane as a helical span at residues 287–307 (DVLIWFGYLNSTFNPMVYAFF). Residues 308–339 (YPWFRKALKMMLFGKIFQKDSSRCKLFLELSS) are Cytoplasmic-facing.

Belongs to the G-protein coupled receptor 1 family. As to expression, expressed at low level in both the central and peripheral nervous system. Moderately expressed in stomach. Low levels in amygdala, kidney, and lung, and small intestine. Trace amounts in cerebellum, dorsal root ganglia, hippocampus, hypothalamus, liver, medulla, pancreas, pituitary, pontine reticular formation, prostate, skeletal muscle and spleen.

It localises to the endomembrane system. The protein localises to the endoplasmic reticulum membrane. Its subcellular location is the cell membrane. With respect to regulation, activated by SEP-363856 small molecule: IHCH-7179 acts both as an agonist activator for HTR1A and TAAR1. Its function is as follows. Intracellular G-protein coupled receptor for trace amines, which recognizes endogenous amine-containing metabolites such as beta-phenylethylamine (beta-PEA), 3-iodothyronamine (T1AM), isoamylamine (IAA), cadaverine (CAD), cyclohexylamine (CHA), p-tyramine (p-TYR), trimethylamine (TMA), octopamine and tryptamine. Also functions as a receptor for various drugs and psychoactive substances, such as amphetamine and methamphetamine. Unresponsive to classical biogenic amines, such as epinephrine and histamine and only partially activated by dopamine and serotonin. Expressed in both the central and peripheral nervous system: TAAR1 activation regulates the activity of several neurotransmitter signaling pathways by (1) decreasing the basal firing rates of the neurons involved and by (2) lowering the sensitivity of receptors to neurotransmitters. Ligand binding causes a conformation change that triggers signaling via guanine nucleotide-binding proteins (G proteins) and modulates the activity of downstream effectors. TAAR1 is coupled with different G(i)/G(o)-, G(s)- or G(q)/G(11) classes of G alpha proteins depending on the ligand. CAD-binding is coupled to G(i)/G(o) G alpha proteins and mediates inhibition of adenylate cyclase activity. T1AM- or beta-PEA-binding is coupled to G(s) G alpha proteins and mediates activation of adenylate cyclase activity. CHA- or IAA-binding is coupled to G(q)/G(11) G alpha proteins and activates phospholipase C-beta, releasing diacylglycerol (DAG) and inositol 1,4,5-trisphosphate (IP3) second messengers. TMA-binding is coupled with all three G(i)/G(o)-, G(s)- or G(q)/G(11) G alpha protein subtypes. Amphetamine-binding is coupled with G(s)- or G(12)/G(13) G alpha protein subtypes. The protein is Trace amine-associated receptor 1 of Homo sapiens (Human).